The chain runs to 66 residues: Venom protein 27.1 (66 aa).

The N-terminal stretch at 1 to 22 (MNTKTLIVVFLVCLLVSEVVLA) is a signal peptide.

In terms of processing, contains 1 disulfide bond. Expressed by the venom gland.

The protein resides in the secreted. This Lychas mucronatus (Chinese swimming scorpion) protein is Venom protein 27.1.